Here is a 261-residue protein sequence, read N- to C-terminus: Small ribosomal subunit protein eS1 (261 aa).

Basic residues predominate over residues 1 to 18; that stretch reads MAVGKNKRISKGKKGGKK. Positions 1-22 are disordered; that stretch reads MAVGKNKRISKGKKGGKKKAAD.

The protein belongs to the eukaryotic ribosomal protein eS1 family. Component of the small ribosomal subunit. Mature ribosomes consist of a small (40S) and a large (60S) subunit. The 40S subunit contains about 33 different proteins and 1 molecule of RNA (18S). The 60S subunit contains about 49 different proteins and 3 molecules of RNA (25S, 5.8S and 5S).

It is found in the cytoplasm. The protein is Small ribosomal subunit protein eS1 of Cicer arietinum (Chickpea).